A 243-amino-acid chain; its full sequence is tRNA pseudouridine synthase A (243 aa).

Asp-51 (nucleophile) is an active-site residue. Residue Tyr-111 coordinates substrate.

Belongs to the tRNA pseudouridine synthase TruA family. As to quaternary structure, homodimer.

The enzyme catalyses uridine(38/39/40) in tRNA = pseudouridine(38/39/40) in tRNA. Formation of pseudouridine at positions 38, 39 and 40 in the anticodon stem and loop of transfer RNAs. The sequence is that of tRNA pseudouridine synthase A from Neorickettsia sennetsu (strain ATCC VR-367 / Miyayama) (Ehrlichia sennetsu).